We begin with the raw amino-acid sequence, 201 residues long: Recombination protein RecR (201 aa).

The segment at 58–73 (CPECGLLTEEERCGLC) adopts a C4-type zinc-finger fold. One can recognise a Toprim domain in the interval 81–176 (TLLCVVESSA…RTTRIAHGVP (96 aa)).

This sequence belongs to the RecR family.

Functionally, may play a role in DNA repair. It seems to be involved in an RecBC-independent recombinational process of DNA repair. It may act with RecF and RecO. This Halorhodospira halophila (strain DSM 244 / SL1) (Ectothiorhodospira halophila (strain DSM 244 / SL1)) protein is Recombination protein RecR.